The sequence spans 59 residues: Large ribosomal subunit protein uL30 (59 aa).

The protein belongs to the universal ribosomal protein uL30 family. As to quaternary structure, part of the 50S ribosomal subunit.

In Desulfatibacillum aliphaticivorans, this protein is Large ribosomal subunit protein uL30.